The following is a 564-amino-acid chain: Rho guanine nucleotide exchange factor 9 (564 aa).

Positions 8–67 (DSIVSAEAVWDHATMANRELAFKAGDVIKVLDASNKDWWWGQIDDEEGWFPASFVRLWVN) constitute an SH3 domain. An interaction with GPHN region spans residues 100-110 (RDQMRANVINE). One can recognise a DH domain in the interval 103 to 287 (MRANVINEIM…RNVTQQINER (185 aa)). The PH domain occupies 318 to 425 (ELIYTGEMAW…WLRAFREERK (108 aa)). The segment at 451–470 (KVPKQKGVNSARSVPPSYPP) is disordered. Phosphoserine is present on S502.

Interacts with GPHN.

The protein resides in the cytoplasm. It is found in the postsynaptic density. Functionally, acts as a guanine nucleotide exchange factor (GEF) for CDC42. Promotes formation of GPHN clusters. The polypeptide is Rho guanine nucleotide exchange factor 9 (ARHGEF9) (Pongo abelii (Sumatran orangutan)).